A 316-amino-acid polypeptide reads, in one-letter code: Aspartate carbamoyltransferase catalytic subunit (316 aa).

Residues R58 and T59 each contribute to the carbamoyl phosphate site. K86 contacts L-aspartate. Residues R108, H136, and Q139 each coordinate carbamoyl phosphate. Positions 169 and 223 each coordinate L-aspartate. The carbamoyl phosphate site is built by G264 and P265.

It belongs to the aspartate/ornithine carbamoyltransferase superfamily. ATCase family. In terms of assembly, heterododecamer (2C3:3R2) of six catalytic PyrB chains organized as two trimers (C3), and six regulatory PyrI chains organized as three dimers (R2).

It carries out the reaction carbamoyl phosphate + L-aspartate = N-carbamoyl-L-aspartate + phosphate + H(+). The protein operates within pyrimidine metabolism; UMP biosynthesis via de novo pathway; (S)-dihydroorotate from bicarbonate: step 2/3. Catalyzes the condensation of carbamoyl phosphate and aspartate to form carbamoyl aspartate and inorganic phosphate, the committed step in the de novo pyrimidine nucleotide biosynthesis pathway. The chain is Aspartate carbamoyltransferase catalytic subunit from Granulibacter bethesdensis (strain ATCC BAA-1260 / CGDNIH1).